The sequence spans 933 residues: DNA repair-scaffolding protein (933 aa).

Disordered regions lie at residues 1–34 (MSGA…LRRG), 67–174 (SEKT…KGTL), and 205–224 (YSSD…IDSE). Composition is skewed to basic and acidic residues over residues 16-29 (WHIE…ERSQ), 71-87 (GITE…KTET), and 119-132 (RDGR…RLGD). The segment covering 138–148 (PEDEDIEDELQ) has biased composition (acidic residues). The tract at residues 175-469 (DISDCDSCAS…GTGWTHGHEK (295 aa)) is necessary for interaction with RAD51. The segment covering 214 to 224 (DPEHSLFIDSE) has biased composition (basic and acidic residues).

As to quaternary structure, found in a complex, at least composed of BLM, RAD51 and SPIDR; the complex formation is mediated by SPIDR. Interacts (via C-terminal region) with BLM; the interaction is direct. Interacts with RAD51; the interaction is direct. Interacts (via the C-terminal region) with FIGNL1 (via N-terminal one-half region); the interaction is direct.

Its subcellular location is the nucleus. In terms of biological role, plays a role in DNA double-strand break (DBS) repair via homologous recombination (HR). Serves as a scaffolding protein that helps to promote the recruitment of DNA-processing enzymes like the helicase BLM and recombinase RAD51 to site of DNA damage, and hence contributes to maintain genomic integrity. The sequence is that of DNA repair-scaffolding protein (Spidr) from Mus musculus (Mouse).